The primary structure comprises 223 residues: MSQTCQTGYAYMQPFVQIIPSNLSLACGLRILRAEDYQSSLTTEELISAAKQDAEKILADAQEVYEQQKQLGWQAGMDEARTLQATLIHETQLQCQQFYRHVEQQMSEVVLLAVRKILNDYDQVDMTLQVVREALALVSNQKQVVVRVNPDQAGTIREQIAKVHKDFPEISYLEVTADARLDQGGCILETEVGIIDASIDGQIEALSRAISTTLGQMKVTEEE.

The protein belongs to the SctL stator family. As to quaternary structure, the core secretion machinery of the T3SS is composed of approximately 20 different proteins, including cytoplasmic components, a base, an export apparatus and a needle. This subunit is part of the cytosolic complex. Interacts directly with YscN/SctN (T3SS ATPase) and YscQ/SctQ (the major sorting platform component). Forms homodimers.

The protein resides in the cytoplasm. Functionally, component of the type III secretion system (T3SS), also called injectisome, which is used to inject bacterial effector proteins into eukaryotic host cells. Acts as a regulator of the YscN/SctN ATPase activity. Overexpression of YscL/SctL abolishes type III secretion and down-regulates the expression of secretion apparatus components. This chain is Type 3 secretion system stator protein, found in Yersinia enterocolitica.